The chain runs to 201 residues: High mobility group protein homolog 068R (201 aa).

DNA-binding regions (HMG box) lie at residues 70–138 and 143–201; these read PKRN…ELEK and TPSK…KAAK.

The protein belongs to the IIV-6 401R family.

Its subcellular location is the host nucleus. This chain is High mobility group protein homolog 068R, found in Invertebrate iridescent virus 3 (IIV-3).